The chain runs to 142 residues: Transcriptional regulator MraZ (142 aa).

2 SpoVT-AbrB domains span residues 5–46 and 75–118; these read THPV…DRSE and AAAQ…DSEA.

The protein belongs to the MraZ family. As to quaternary structure, forms oligomers.

Its subcellular location is the cytoplasm. The protein resides in the nucleoid. In Tropheryma whipplei (strain TW08/27) (Whipple's bacillus), this protein is Transcriptional regulator MraZ.